A 308-amino-acid polypeptide reads, in one-letter code: Probable very-long-chain enoyl-CoA reductase art-1 (308 aa).

Residues 7–85 enclose the Ubiquitin-like domain; the sequence is VYDAKRTDNL…VLYVRDLGPQ (79 aa). A run of 4 helical transmembrane segments spans residues 112–132, 169–189, 194–214, and 255–275; these read FIYGQAAVNATMHPAVQIAFF, WGFAAFVAYFVNHPLFTPPAF, VYFGLAGFVISEFGNLSIHIL, and WIFFSIMVQSLPAIIFTTAGF.

Belongs to the steroid 5-alpha reductase family.

The protein resides in the endoplasmic reticulum membrane. It carries out the reaction a very-long-chain 2,3-saturated fatty acyl-CoA + NADP(+) = a very-long-chain (2E)-enoyl-CoA + NADPH + H(+). It participates in lipid metabolism; fatty acid biosynthesis. Functionally, catalyzes the last of the four reactions of the long-chain fatty acids elongation cycle. This endoplasmic reticulum-bound enzymatic process, allows the addition of 2 carbons to the chain of long- and very long-chain fatty acids/VLCFAs per cycle. This enzyme reduces the trans-2,3-enoyl-CoA fatty acid intermediate to an acyl-CoA that can be further elongated by entering a new cycle of elongation. Thereby, it participates in the production of VLCFAs of different chain lengths that are involved in multiple biological processes as precursors of membrane lipids and lipid mediators. The sequence is that of Probable very-long-chain enoyl-CoA reductase art-1 (art-1) from Caenorhabditis elegans.